The sequence spans 961 residues: MHLNDTMASPLEPLSWSSSPNLIVDTLREDKDYRVNYGDCTTIGHHEIKETPDKCDSLDNANSPVTATVLTSISEDSRDQFENSVLQLRDQDEPENTAPQGSSHSGDGGSYSGNEDIRIHFGHSGSGNSGFLEGLFGCLRPVWNIIGKAYSTDYKLQQQETWEVPFEEISELQWLGSGAQGAVFLGKFRGEEVAIKKVREQKETDIKHLRKLKHPNIIAFKGVCTQAPCYCLIMEYCAHGQLYEVLRAGRKVSPRLLVDWSNGIASGMNYLHLHKIIHRDLKSPNVLVTHTDTVKISDFGTSKELSDKSTKMSFAGTVAWMAPEVIRNEPVSEKVDIWSFGVLLWELLTGEIPYKDVDSSAIIWGVGSNSLHLPVPSTCPDGFKILMKQTWHSKPRNRPSFRQILMHLDIASADVLGTPQETYFKSQAEWREEVKKHFEKIKSEGTCIHRLDEELIRRRREELRHALDIREHYERKLERANNLYMELSAIMLQLEVREKELIRREQAVEKKYPGTYKRHPVRPIVHPNSVEKLIKKKGPPSRIPSQTKRPDLLKSDGIVSAEGSAASASPISGSPKTSSGGGKNRYRSKPRHRRVNSKGSHADFIGVLKHLESPALSQQSSQHQTLASPPVTSCSPYHETSQVMPTFHQTLNVHGQNIANCANNLRYFGPAAALRSPLSSHAQRRMSGSSPDLLSSTLEADSHIQPEREYEYCQQDPYNRCPGCTEAVQQDTDTGNWDSTNVVTAEYRTSGGDPPESPRHNLVQENNEKLESGGEQFSSFKAAIGVSALTVPTPPALPRRIRTLRKNGDESSEEEEGEVDSEVEFPRRHRPPRGMSKCQSYSTFSSENFSVSDGEEGNTSDHSNSPDDVAGGGKVWHGDKLDDLSQTPEIPIEISMQSDGLSDKECAVRRVKTQMSLGKLCTEEHNYENAGNFAESDCDSSEGECSDATVLTNNPVNSSTW.

Residues 88–118 (LRDQDEPENTAPQGSSHSGDGGSYSGNEDIR) are disordered. A Protein kinase domain is found at 169–410 (ISELQWLGSG…FRQILMHLDI (242 aa)). ATP contacts are provided by residues 175–183 (LGSGAQGAV) and lysine 196. Catalysis depends on aspartate 280, which acts as the Proton acceptor. Leucine-zipper regions lie at residues 434–455 (VKKHFEKIKSEGTCIHRLDEEL) and 487–508 (LSAIMLQLEVREKELIRREQAV). Residues 458–497 (RRREELRHALDIREHYERKLERANNLYMELSAIMLQLEVR) are a coiled coil. Disordered stretches follow at residues 513–600 (PGTY…SKGS), 615–637 (ALSQQSSQHQTLASPPVTSCSPY), and 799–883 (RRIR…KLDD). Residues 560 to 578 (SAEGSAASASPISGSPKTS) are compositionally biased toward low complexity. Residues 584–596 (NRYRSKPRHRRVN) show a composition bias toward basic residues. Acidic residues predominate over residues 810-823 (ESSEEEEGEVDSEV). Positions 811 to 824 (SSEEEEGEVDSEVE) are acidic. Over residues 837–851 (KCQSYSTFSSENFSV) the composition is skewed to polar residues.

It belongs to the protein kinase superfamily. Ser/Thr protein kinase family.

Its subcellular location is the cytoplasm. The protein resides in the membrane. It carries out the reaction L-seryl-[protein] + ATP = O-phospho-L-seryl-[protein] + ADP + H(+). The catalysed reaction is L-threonyl-[protein] + ATP = O-phospho-L-threonyl-[protein] + ADP + H(+). In terms of biological role, may have a role in the JNK signaling pathway. The protein is Mitogen-activated protein kinase kinase kinase 13-A (map3k13-a) of Xenopus laevis (African clawed frog).